A 396-amino-acid chain; its full sequence is Obg-like ATPase 1 (396 aa).

The OBG-type G domain occupies 23–283 (LKIGIVGLPN…MSAEEKQKYL (261 aa)). Position 32–37 (32–37 (NVGKST)) interacts with ATP. The Mg(2+) site is built by S36 and T56. Residue L231 coordinates ATP. The Nuclear export signal motif lies at 267 to 274 (LELKLQDM). The region spanning 304–387 (QLEYFFTAGP…EDGDIIFFKF (84 aa)) is the TGS domain.

It belongs to the TRAFAC class OBG-HflX-like GTPase superfamily. OBG GTPase family. YchF/OLA1 subfamily. In terms of assembly, monomer. The cofactor is Mg(2+).

The protein resides in the cytoplasm. It localises to the nucleus. Its subcellular location is the nucleolus. Hydrolyzes ATP, and can also hydrolyze GTP with lower efficiency. Has lower affinity for GTP. The sequence is that of Obg-like ATPase 1 from Gallus gallus (Chicken).